A 778-amino-acid chain; its full sequence is Arf-GAP with coiled-coil, ANK repeat and PH domain-containing protein 2 (778 aa).

The BAR domain occupies 1–226 (MKMTVDFEEC…MKDLGAQLDR (226 aa)). The region spanning 266–361 (GIVMEGYLFK…WIKAVQTSIA (96 aa)) is the PH domain. Residues 371 to 391 (SEKLDKKSSPSTGSLDSGNES) are disordered. Positions 379–388 (SPSTGSLDSG) are enriched in polar residues. Phosphoserine occurs at positions 384 and 387. Residues 399–520 (ESALQRVQCV…KFVDKYSVSS (122 aa)) enclose the Arf-GAP domain. The segment at 414-437 (CCDCGLADPRWASINLGITLCIEC) adopts a C4-type zinc-finger fold. The segment at 518–596 (VSSSPPEQEK…EPEGERQDSS (79 aa)) is disordered. S521 is subject to Phosphoserine. Over residues 524–539 (EQEKKVVSKDSEEKRL) the composition is skewed to basic and acidic residues. Polar residues predominate over residues 550–569 (VRTSIQSSVKSNDSGIQQSS). Phosphoserine occurs at positions 581 and 584. ANK repeat units follow at residues 640-669 (NKAT…NVNQ), 673-702 (QGRG…NQHA), and 706-735 (EGKD…NEEM). Y742 is modified (phosphotyrosine). A Phosphoserine modification is found at S775.

Interacts with RAB35 (GTP-bound form); the interaction is direct and probably recruits ACAP2 to membranes. Interacts with MICALL1; the interaction is indirect through RAB35.

The protein localises to the endosome membrane. It is found in the cell membrane. Its activity is regulated as follows. GAP activity stimulated by phosphatidylinositol 4,5-bisphosphate (PIP2) and phosphatidic acid. Its function is as follows. GTPase-activating protein (GAP) for ADP ribosylation factor 6 (ARF6). Doesn't show GAP activity for RAB35. The sequence is that of Arf-GAP with coiled-coil, ANK repeat and PH domain-containing protein 2 (ACAP2) from Oryctolagus cuniculus (Rabbit).